The chain runs to 91 residues: Elongation factor 1-beta (91 aa).

It belongs to the EF-1-beta/EF-1-delta family.

Its function is as follows. Promotes the exchange of GDP for GTP in EF-1-alpha/GDP, thus allowing the regeneration of EF-1-alpha/GTP that could then be used to form the ternary complex EF-1-alpha/GTP/AAtRNA. This Sulfurisphaera tokodaii (strain DSM 16993 / JCM 10545 / NBRC 100140 / 7) (Sulfolobus tokodaii) protein is Elongation factor 1-beta.